The primary structure comprises 141 residues: Hemoglobin subunit alpha-1/2 (141 aa).

The region spanning V1–R141 is the Globin domain. Phosphoserine is present on S3. An N6-succinyllysine modification is found at K7. T8 carries the post-translational modification Phosphothreonine. An N6-succinyllysine modification is found at K11. Residue K16 is modified to N6-acetyllysine; alternate. N6-succinyllysine; alternate is present on K16. Y24 carries the post-translational modification Phosphotyrosine. An N6-succinyllysine modification is found at K40. S49 carries the phosphoserine modification. Residue H58 coordinates O2. H87 contacts heme b. The residue at position 102 (S102) is a Phosphoserine. T108 carries the post-translational modification Phosphothreonine. S124 is modified (phosphoserine). A phosphothreonine mark is found at T134 and T137. Residue S138 is modified to Phosphoserine.

The protein belongs to the globin family. As to quaternary structure, heterotetramer of two alpha chains and two beta chains. In terms of tissue distribution, red blood cells.

Involved in oxygen transport from the lung to the various peripheral tissues. This Leptonychotes weddellii (Weddell seal) protein is Hemoglobin subunit alpha-1/2.